The chain runs to 26 residues: ATP synthase subunit gamma, mitochondrial (26 aa).

It belongs to the ATPase gamma chain family. In terms of assembly, F-type ATPases have 2 components, CF(1) - the catalytic core - and CF(0) - the membrane proton channel. CF(1) has five subunits: alpha(3), beta(3), gamma(1), delta(1), epsilon(1). CF(0) has three main subunits: a, b and c.

It localises to the mitochondrion. It is found in the mitochondrion inner membrane. Functionally, mitochondrial membrane ATP synthase (F(1)F(0) ATP synthase or Complex V) produces ATP from ADP in the presence of a proton gradient across the membrane which is generated by electron transport complexes of the respiratory chain. F-type ATPases consist of two structural domains, F(1) - containing the extramembraneous catalytic core, and F(0) - containing the membrane proton channel, linked together by a central stalk and a peripheral stalk. During catalysis, ATP synthesis in the catalytic domain of F(1) is coupled via a rotary mechanism of the central stalk subunits to proton translocation. Part of the complex F(1) domain and the central stalk which is part of the complex rotary element. The gamma subunit protrudes into the catalytic domain formed of alpha(3)beta(3). Rotation of the central stalk against the surrounding alpha(3)beta(3) subunits leads to hydrolysis of ATP in three separate catalytic sites on the beta subunits. The polypeptide is ATP synthase subunit gamma, mitochondrial (ATPC) (Spinacia oleracea (Spinach)).